The chain runs to 288 residues: UTP--glucose-1-phosphate uridylyltransferase (288 aa).

The protein belongs to the UDPGP type 2 family.

The catalysed reaction is alpha-D-glucose 1-phosphate + UTP + H(+) = UDP-alpha-D-glucose + diphosphate. The protein operates within glycolipid metabolism; diglucosyl-diacylglycerol biosynthesis. Functionally, catalyzes the formation of UDP-glucose from glucose-1-phosphate and UTP. This is an intermediate step in the biosynthesis of diglucosyl-diacylglycerol (Glc2-DAG), i.e. the predominant glycolipid found in the S.aureus membrane, which is also used as a membrane anchor for lipoteichoic acid (LTA). The chain is UTP--glucose-1-phosphate uridylyltransferase (gtaB) from Staphylococcus aureus (strain MSSA476).